The primary structure comprises 291 residues: MLTVRAPATSANLGSGFDVFGVALERPADVVRLEKADRVTIDVTGAGSQYIPEDPDKNTVGAVADALDAPARIQIDKGVRPASGLGSSAASAAAAAVGLNELYDRGYSREELVPIAAKGEAVVSGDAHDDNVAPSIMGGFTIATDKGVTQVDADIPLVACLPDIVVSTRDARNVVPETARVDQMVETVGNAASLTTGMHRDDPELVGQGMHDTVVTPARAKLIDGYEQVREAALAAGATGVTISGAGPTVIAACAEEDRRQIASTMLDAFGERGVDARVYQTRIGGGAEVF.

Position 80-90 (80-90) interacts with ATP; that stretch reads RPASGLGSSAA.

The protein belongs to the GHMP kinase family. Homoserine kinase subfamily.

It is found in the cytoplasm. The catalysed reaction is L-homoserine + ATP = O-phospho-L-homoserine + ADP + H(+). The protein operates within amino-acid biosynthesis; L-threonine biosynthesis; L-threonine from L-aspartate: step 4/5. In terms of biological role, catalyzes the ATP-dependent phosphorylation of L-homoserine to L-homoserine phosphate. This is Homoserine kinase from Haloarcula marismortui (strain ATCC 43049 / DSM 3752 / JCM 8966 / VKM B-1809) (Halobacterium marismortui).